The primary structure comprises 197 residues: Large ribosomal subunit protein uL11 (197 aa).

It belongs to the universal ribosomal protein uL11 family. As to quaternary structure, part of the ribosomal stalk of the 50S ribosomal subunit. Interacts with L10 and the large rRNA to form the base of the stalk. L10 forms an elongated spine to which L12 dimers bind in a sequential fashion forming a multimeric L10(L12)X complex. In terms of processing, one or more lysine residues are methylated.

Its function is as follows. Forms part of the ribosomal stalk which helps the ribosome interact with GTP-bound translation factors. In Mycoplasmopsis pulmonis (strain UAB CTIP) (Mycoplasma pulmonis), this protein is Large ribosomal subunit protein uL11.